The primary structure comprises 175 residues: Large ribosomal subunit protein uL10 (175 aa).

Belongs to the universal ribosomal protein uL10 family. Part of the ribosomal stalk of the 50S ribosomal subunit. The N-terminus interacts with L11 and the large rRNA to form the base of the stalk. The C-terminus forms an elongated spine to which L12 dimers bind in a sequential fashion forming a multimeric L10(L12)X complex.

In terms of biological role, forms part of the ribosomal stalk, playing a central role in the interaction of the ribosome with GTP-bound translation factors. The chain is Large ribosomal subunit protein uL10 from Psychrobacter cryohalolentis (strain ATCC BAA-1226 / DSM 17306 / VKM B-2378 / K5).